Here is a 186-residue protein sequence, read N- to C-terminus: uncharacterized protein (186 aa).

Asn34 carries N-linked (GlcNAc...) asparagine; by host glycosylation. 3 helical membrane-spanning segments follow: residues 47-67 (IGMV…ATTF), 114-134 (ILET…IVLL), and 144-164 (LEMI…TLFF).

The protein localises to the membrane. This is an uncharacterized protein from Acanthamoeba polyphaga mimivirus (APMV).